The chain runs to 234 residues: Leucyl/phenylalanyl-tRNA--protein transferase (234 aa).

This sequence belongs to the L/F-transferase family.

The protein resides in the cytoplasm. The catalysed reaction is N-terminal L-lysyl-[protein] + L-leucyl-tRNA(Leu) = N-terminal L-leucyl-L-lysyl-[protein] + tRNA(Leu) + H(+). It carries out the reaction N-terminal L-arginyl-[protein] + L-leucyl-tRNA(Leu) = N-terminal L-leucyl-L-arginyl-[protein] + tRNA(Leu) + H(+). The enzyme catalyses L-phenylalanyl-tRNA(Phe) + an N-terminal L-alpha-aminoacyl-[protein] = an N-terminal L-phenylalanyl-L-alpha-aminoacyl-[protein] + tRNA(Phe). In terms of biological role, functions in the N-end rule pathway of protein degradation where it conjugates Leu, Phe and, less efficiently, Met from aminoacyl-tRNAs to the N-termini of proteins containing an N-terminal arginine or lysine. In Escherichia coli O81 (strain ED1a), this protein is Leucyl/phenylalanyl-tRNA--protein transferase.